Reading from the N-terminus, the 379-residue chain is Cytochrome b (379 aa).

A run of 4 helical transmembrane segments spans residues 33-53 (FGSLLGACLTIQIITGLFLAM), 77-98 (WTIRYLHANGASMFFLCLFIHV), 113-133 (WNVGIILLFSVMATAFMGYVL), and 178-198 (FFALHFILPFIISALVMIHLL). Residues His83 and His97 each contribute to the heme b site. The heme b site is built by His182 and His196. A ubiquinone is bound at residue His201. The next 4 helical transmembrane spans lie at 226–246 (TKDFLGLLLLTLLLMTMALFY), 288–308 (LGGVMALILSILILMVIPFLQ), 320–340 (LSQFLFWILVADLLTLTWIGG), and 347–367 (FINIGQMASMLYFSLMVFIMP).

Belongs to the cytochrome b family. In terms of assembly, the cytochrome bc1 complex contains 11 subunits: 3 respiratory subunits (MT-CYB, CYC1 and UQCRFS1), 2 core proteins (UQCRC1 and UQCRC2) and 6 low-molecular weight proteins (UQCRH/QCR6, UQCRB/QCR7, UQCRQ/QCR8, UQCR10/QCR9, UQCR11/QCR10 and a cleavage product of UQCRFS1). This cytochrome bc1 complex then forms a dimer. The cofactor is heme b.

The protein resides in the mitochondrion inner membrane. Functionally, component of the ubiquinol-cytochrome c reductase complex (complex III or cytochrome b-c1 complex) that is part of the mitochondrial respiratory chain. The b-c1 complex mediates electron transfer from ubiquinol to cytochrome c. Contributes to the generation of a proton gradient across the mitochondrial membrane that is then used for ATP synthesis. In Lepilemur dorsalis (Grey-backed sportive lemur), this protein is Cytochrome b (MT-CYB).